Consider the following 65-residue polypeptide: Large ribosomal subunit protein bL35 (65 aa).

The protein belongs to the bacterial ribosomal protein bL35 family.

This chain is Large ribosomal subunit protein bL35, found in Edwardsiella ictaluri (strain 93-146).